Reading from the N-terminus, the 471-residue chain is Light-independent protochlorophyllide reductase subunit N (471 aa).

Residues cysteine 22, cysteine 47, and cysteine 107 each contribute to the [4Fe-4S] cluster site.

The protein belongs to the BchN/ChlN family. In terms of assembly, protochlorophyllide reductase is composed of three subunits; ChlL, ChlN and ChlB. Forms a heterotetramer of two ChlB and two ChlN subunits. [4Fe-4S] cluster serves as cofactor.

The protein localises to the plastid. Its subcellular location is the chloroplast. The catalysed reaction is chlorophyllide a + oxidized 2[4Fe-4S]-[ferredoxin] + 2 ADP + 2 phosphate = protochlorophyllide a + reduced 2[4Fe-4S]-[ferredoxin] + 2 ATP + 2 H2O. It participates in porphyrin-containing compound metabolism; chlorophyll biosynthesis (light-independent). Its function is as follows. Component of the dark-operative protochlorophyllide reductase (DPOR) that uses Mg-ATP and reduced ferredoxin to reduce ring D of protochlorophyllide (Pchlide) to form chlorophyllide a (Chlide). This reaction is light-independent. The NB-protein (ChlN-ChlB) is the catalytic component of the complex. This Huperzia lucidula (Shining clubmoss) protein is Light-independent protochlorophyllide reductase subunit N.